Here is a 177-residue protein sequence, read N- to C-terminus: Large ribosomal subunit protein uL5c (177 aa).

It belongs to the universal ribosomal protein uL5 family. In terms of assembly, part of the 50S ribosomal subunit; contacts the 5S rRNA.

The protein resides in the plastid. Its subcellular location is the chloroplast. Its function is as follows. Binds 5S rRNA, forms part of the central protuberance of the 50S subunit. The protein is Large ribosomal subunit protein uL5c (rpl5) of Cyanidioschyzon merolae (strain NIES-3377 / 10D) (Unicellular red alga).